We begin with the raw amino-acid sequence, 166 residues long: uncharacterized protein (166 aa).

4 helical membrane passes run 7 to 27, 30 to 50, 69 to 89, and 92 to 112; these read VLFKISFLLIILVSLILSLFY, FLFAFLLSFILFGITWAYCYI, IETLRFLFILMIISVFIKSLL, and NSFFPYISFLLSNLILGLVLF.

This sequence to M.jannaschii MJ0795.1 and MJ0785.1.

It localises to the cell membrane. This is an uncharacterized protein from Methanocaldococcus jannaschii (strain ATCC 43067 / DSM 2661 / JAL-1 / JCM 10045 / NBRC 100440) (Methanococcus jannaschii).